A 355-amino-acid polypeptide reads, in one-letter code: Histidinol-phosphate aminotransferase (355 aa).

Residue Lys-211 is modified to N6-(pyridoxal phosphate)lysine.

The protein belongs to the class-II pyridoxal-phosphate-dependent aminotransferase family. Histidinol-phosphate aminotransferase subfamily. As to quaternary structure, homodimer. The cofactor is pyridoxal 5'-phosphate.

It catalyses the reaction L-histidinol phosphate + 2-oxoglutarate = 3-(imidazol-4-yl)-2-oxopropyl phosphate + L-glutamate. The protein operates within amino-acid biosynthesis; L-histidine biosynthesis; L-histidine from 5-phospho-alpha-D-ribose 1-diphosphate: step 7/9. The sequence is that of Histidinol-phosphate aminotransferase from Aeromonas salmonicida (strain A449).